A 501-amino-acid polypeptide reads, in one-letter code: Aldehyde dehydrogenase 1A1 (501 aa).

S2 bears the N-acetylserine mark. 2 positions are modified to N6-acetyllysine: K91 and K128. Residues 167–170, 193–196, 226–227, and 246–247 contribute to the NAD(+) site; these read IPWN, KPAE, GP, and GS. At K252 the chain carries N6-acetyllysine. The active-site Proton acceptor is the E269. 269–271 lines the NAD(+) pocket; sequence ELG. The active-site Nucleophile is C303. Residues 336–501 are mediates interaction with PRMT3; the sequence is LTQGINQGPQ…VAMKISQKNS (166 aa). T337 bears the Phosphothreonine mark. 349–353 contacts NAD(+); the sequence is EQHDK. An N6-acetyllysine mark is found at K353 and K367. An NAD(+)-binding site is contributed by 400 to 402; that stretch reads EIF. K410 carries the post-translational modification N6-acetyllysine. S413 is subject to Phosphoserine. N6-acetyllysine occurs at positions 419, 435, and 495.

The protein belongs to the aldehyde dehydrogenase family. In terms of assembly, homotetramer. Interacts with PRMT3; the interaction is direct, inhibits ALDH1A1 aldehyde dehydrogenase activity and is independent of the methyltransferase activity of PRMT3. Post-translationally, the N-terminus is blocked most probably by acetylation. In terms of tissue distribution, strongly expressed in kidney, lung, testis, intestine, stomach, and trachea, but weakly in the liver.

It localises to the cytoplasm. The protein localises to the cytosol. Its subcellular location is the cell projection. It is found in the axon. The enzyme catalyses an aldehyde + NAD(+) + H2O = a carboxylate + NADH + 2 H(+). It catalyses the reaction all-trans-retinal + NAD(+) + H2O = all-trans-retinoate + NADH + 2 H(+). The catalysed reaction is 9-cis-retinal + NAD(+) + H2O = 9-cis-retinoate + NADH + 2 H(+). It carries out the reaction 11-cis-retinal + NAD(+) + H2O = 11-cis-retinoate + NADH + 2 H(+). The enzyme catalyses 13-cis-retinal + NAD(+) + H2O = 13-cis-retinoate + NADH + 2 H(+). It catalyses the reaction 3-deoxyglucosone + NAD(+) + H2O = 2-dehydro-3-deoxy-D-gluconate + NADH + 2 H(+). The catalysed reaction is (E)-4-hydroxynon-2-enal + NAD(+) + H2O = (E)-4-hydroxynon-2-enoate + NADH + 2 H(+). It carries out the reaction malonaldehyde + NAD(+) + H2O = 3-oxopropanoate + NADH + 2 H(+). The enzyme catalyses hexanal + NAD(+) + H2O = hexanoate + NADH + 2 H(+). It catalyses the reaction propanal + NAD(+) + H2O = propanoate + NADH + 2 H(+). The catalysed reaction is acetaldehyde + NAD(+) + H2O = acetate + NADH + 2 H(+). It carries out the reaction benzaldehyde + NAD(+) + H2O = benzoate + NADH + 2 H(+). The enzyme catalyses 4-aminobutanal + NAD(+) + H2O = 4-aminobutanoate + NADH + 2 H(+). The protein operates within cofactor metabolism; retinol metabolism. With respect to regulation, inhibited by chloral hydrate. Cytosolic dehydrogenase that catalyzes the irreversible oxidation of a wide range of aldehydes to their corresponding carboxylic acid. Functions downstream of retinol dehydrogenases and catalyzes the oxidation of retinaldehyde into retinoic acid, the second step in the oxidation of retinol/vitamin A into retinoic acid. This pathway is crucial to control the levels of retinol and retinoic acid, two important molecules which excess can be teratogenic and cytotoxic. Also oxidizes aldehydes resulting from lipid peroxidation like (E)-4-hydroxynon-2-enal/HNE, malonaldehyde and hexanal that form protein adducts and are highly cytotoxic. By participating for instance to the clearance of (E)-4-hydroxynon-2-enal/HNE in the lens epithelium prevents the formation of HNE-protein adducts and lens opacification. Functions also downstream of fructosamine-3-kinase in the fructosamine degradation pathway by catalyzing the oxidation of 3-deoxyglucosone, the carbohydrate product of fructosamine 3-phosphate decomposition, which is itself a potent glycating agent that may react with lysine and arginine side-chains of proteins. Also has an aminobutyraldehyde dehydrogenase activity and is probably part of an alternative pathway for the biosynthesis of GABA/4-aminobutanoate in midbrain, thereby playing a role in GABAergic synaptic transmission. The chain is Aldehyde dehydrogenase 1A1 from Rattus norvegicus (Rat).